Here is a 183-residue protein sequence, read N- to C-terminus: Inner membrane protein p54 (183 aa).

The helical transmembrane segment at tyrosine 32–phenylalanine 52 threads the bilayer. Residues glutamate 81–threonine 157 form a disordered region. Positions arginine 111–proline 122 are enriched in polar residues. A compositionally biased stretch (low complexity) spans alanine 130 to alanine 143. An interaction with host DYNLL1 region spans residues tyrosine 149–threonine 161.

This sequence belongs to the asfivirus envelope protein p54 family. Interacts with the host light chain cytoplasmic dynein DYNLL1; this interaction is critical for intracellular microtubule-dependent virus transport toward viral factories.

It localises to the virion membrane. It is found in the host cytoplasm. The protein localises to the host cytoskeleton. Its subcellular location is the host endoplasmic reticulum membrane. Its function is as follows. Inner envelope protein involved, through its interaction with host dynein, in the intracellular microtubule-dependent transport of viral capsid toward viral factories. Seems to induce caspase-3 activation and apoptosis. Plays a role in virion morphogenesis by recruiting and transforming the host ER membranes into the precursors of the viral envelope. Involved in virus attachment to the host cell. The sequence is that of Inner membrane protein p54 from Ornithodoros (relapsing fever ticks).